Reading from the N-terminus, the 127-residue chain is Holo-[acyl-carrier-protein] synthase (127 aa).

Asp-9 and Glu-58 together coordinate Mg(2+).

Belongs to the P-Pant transferase superfamily. AcpS family. It depends on Mg(2+) as a cofactor.

It is found in the cytoplasm. The catalysed reaction is apo-[ACP] + CoA = holo-[ACP] + adenosine 3',5'-bisphosphate + H(+). Functionally, transfers the 4'-phosphopantetheine moiety from coenzyme A to a Ser of acyl-carrier-protein. The chain is Holo-[acyl-carrier-protein] synthase from Shewanella putrefaciens (strain CN-32 / ATCC BAA-453).